A 250-amino-acid polypeptide reads, in one-letter code: Triosephosphate isomerase (250 aa).

Substrate is bound at residue Asn9–Lys11. His100 serves as the catalytic Electrophile. Glu169 functions as the Proton acceptor in the catalytic mechanism. Substrate-binding positions include Gly175, Ser208, and Gly229–Gly230.

It belongs to the triosephosphate isomerase family. As to quaternary structure, homodimer.

The protein localises to the cytoplasm. The catalysed reaction is D-glyceraldehyde 3-phosphate = dihydroxyacetone phosphate. It functions in the pathway carbohydrate biosynthesis; gluconeogenesis. Its pathway is carbohydrate degradation; glycolysis; D-glyceraldehyde 3-phosphate from glycerone phosphate: step 1/1. In terms of biological role, involved in the gluconeogenesis. Catalyzes stereospecifically the conversion of dihydroxyacetone phosphate (DHAP) to D-glyceraldehyde-3-phosphate (G3P). The sequence is that of Triosephosphate isomerase from Synechococcus sp. (strain JA-2-3B'a(2-13)) (Cyanobacteria bacterium Yellowstone B-Prime).